A 397-amino-acid polypeptide reads, in one-letter code: Elongation factor Tu (397 aa).

The region spanning 10 to 206 (KPHVNIGTIG…AVDENIPQPE (197 aa)) is the tr-type G domain. A G1 region spans residues 19–26 (GHVDHGKT). Residue 19–26 (GHVDHGKT) coordinates GTP. T26 is a Mg(2+) binding site. Residues 62–66 (GITIS) are G2. Residues 83 to 86 (DCPG) are G3. Residues 83 to 87 (DCPGH) and 138 to 141 (NKAD) contribute to the GTP site. The segment at 138-141 (NKAD) is G4. The interval 176–178 (SAL) is G5.

This sequence belongs to the TRAFAC class translation factor GTPase superfamily. Classic translation factor GTPase family. EF-Tu/EF-1A subfamily. As to quaternary structure, monomer.

The protein localises to the cytoplasm. It carries out the reaction GTP + H2O = GDP + phosphate + H(+). GTP hydrolase that promotes the GTP-dependent binding of aminoacyl-tRNA to the A-site of ribosomes during protein biosynthesis. The protein is Elongation factor Tu of Streptomyces cinnamoneus (Streptoverticillium cinnamoneum).